A 102-amino-acid chain; its full sequence is Small ribosomal subunit protein uS10 (102 aa).

Belongs to the universal ribosomal protein uS10 family. As to quaternary structure, part of the 30S ribosomal subunit.

Its function is as follows. Involved in the binding of tRNA to the ribosomes. This chain is Small ribosomal subunit protein uS10, found in Methanococcus maripaludis (strain C5 / ATCC BAA-1333).